A 485-amino-acid chain; its full sequence is GlcNAc-binding protein A (485 aa).

An N-terminal signal peptide occupies residues 1–29; that stretch reads MKKQPQKTLLAIALSVVSGTAMSHGYVSA. One can recognise a Chitin-binding type-4 domain in the interval 30-200; sequence VENGVAEARV…SFYNVIDVKF (171 aa). Residues 437 to 478 form the Chitin-binding type-3 domain; sequence AGTKVLASDGAIYQCKPFPYSGYCVQWTPTATQYQPGTGSHW.

It belongs to the GbpA family.

Its subcellular location is the secreted. Functionally, probably interacts with GlcNAc residues. May promote attachment to both epithelial cell surfaces and chitin. The protein is GlcNAc-binding protein A of Vibrio vulnificus (strain YJ016).